We begin with the raw amino-acid sequence, 240 residues long: 1-(5-phosphoribosyl)-5-[(5-phosphoribosylamino)methylideneamino] imidazole-4-carboxamide isomerase 1 (240 aa).

The active-site Proton acceptor is the D8. The active-site Proton donor is D129.

The protein belongs to the HisA/HisF family.

The protein resides in the cytoplasm. The catalysed reaction is 1-(5-phospho-beta-D-ribosyl)-5-[(5-phospho-beta-D-ribosylamino)methylideneamino]imidazole-4-carboxamide = 5-[(5-phospho-1-deoxy-D-ribulos-1-ylimino)methylamino]-1-(5-phospho-beta-D-ribosyl)imidazole-4-carboxamide. Its pathway is amino-acid biosynthesis; L-histidine biosynthesis; L-histidine from 5-phospho-alpha-D-ribose 1-diphosphate: step 4/9. The protein is 1-(5-phosphoribosyl)-5-[(5-phosphoribosylamino)methylideneamino] imidazole-4-carboxamide isomerase 1 of Ruegeria pomeroyi (strain ATCC 700808 / DSM 15171 / DSS-3) (Silicibacter pomeroyi).